Consider the following 436-residue polypeptide: MAKIVKVIGREIIDSRGNPTVEAEVHLEGGFVGLAAAPSGASTGSREALELRDGDKSRFLGKGVLKAVAAVNNEIAQAIVGKDATNQAEIDQIMIDLDGTENKSNFGANAILAVSLANAKAAAASKGLPLYAYIAELNGTAGVYSMPLPMMNIINGGEHADNNVDIQEFMIQPVGAKTLREALRIGAEVFHNLAKVLKSKGMSTAVGDEGGFAPNLASNADALACIKEAVEKAGYVLGKDVTLAMDCASSEFYNKENGMYEMKGEGKSFTSQEFTHYLEELTKQYPIVSIEDGQDESDWEGFAYQTKVLGDRVQLVGDDLFVTNTKILKEGIEKGIANSILIKFNQIGSLTETLAAIKMAKDAGYTAVISHRSGETEDATIADLAVGTAAGQIKTGSMSRSDRIAKYNQLIRIEEALERAGTPAAFPGLKAVKGQA.

Gln167 is a (2R)-2-phosphoglycerate binding site. The active-site Proton donor is the Glu209. Mg(2+)-binding residues include Asp246, Glu291, and Asp318. (2R)-2-phosphoglycerate is bound by residues Lys343, Arg372, Ser373, and Lys394. Residue Lys343 is the Proton acceptor of the active site.

It belongs to the enolase family. As to quaternary structure, component of the RNA degradosome, a multiprotein complex involved in RNA processing and mRNA degradation. Requires Mg(2+) as cofactor.

The protein resides in the cytoplasm. It localises to the secreted. Its subcellular location is the cell surface. The enzyme catalyses (2R)-2-phosphoglycerate = phosphoenolpyruvate + H2O. It participates in carbohydrate degradation; glycolysis; pyruvate from D-glyceraldehyde 3-phosphate: step 4/5. In terms of biological role, catalyzes the reversible conversion of 2-phosphoglycerate (2-PG) into phosphoenolpyruvate (PEP). It is essential for the degradation of carbohydrates via glycolysis. This chain is Enolase, found in Haemophilus influenzae (strain 86-028NP).